We begin with the raw amino-acid sequence, 251 residues long: NADPH-dependent oxidoreductase (251 aa).

This sequence belongs to the flavin oxidoreductase frp family. FMN serves as cofactor.

In terms of biological role, reduces FMN, organic nitro compounds and disulfide DTNB. Involved in maintenance of the cellular redox state and the disulfide stress response. The sequence is that of NADPH-dependent oxidoreductase (nfrA) from Staphylococcus haemolyticus (strain JCSC1435).